Here is a 283-residue protein sequence, read N- to C-terminus: 4-diphosphocytidyl-2-C-methyl-D-erythritol kinase (283 aa).

Lys-10 is a catalytic residue. Residue 95-105 (PVAAGLGGGSS) participates in ATP binding. Asp-137 is a catalytic residue.

Belongs to the GHMP kinase family. IspE subfamily.

It carries out the reaction 4-CDP-2-C-methyl-D-erythritol + ATP = 4-CDP-2-C-methyl-D-erythritol 2-phosphate + ADP + H(+). Its pathway is isoprenoid biosynthesis; isopentenyl diphosphate biosynthesis via DXP pathway; isopentenyl diphosphate from 1-deoxy-D-xylulose 5-phosphate: step 3/6. Functionally, catalyzes the phosphorylation of the position 2 hydroxy group of 4-diphosphocytidyl-2C-methyl-D-erythritol. This Limosilactobacillus fermentum (strain NBRC 3956 / LMG 18251) (Lactobacillus fermentum) protein is 4-diphosphocytidyl-2-C-methyl-D-erythritol kinase.